We begin with the raw amino-acid sequence, 202 residues long: Histone H1 (202 aa).

Disordered stretches follow at residues 1–50 (MTAI…VTHP) and 114–202 (YKLS…KIAV). The segment covering 18–38 (EASKVKEQAPATDKKPRAPKE) has biased composition (basic and acidic residues). The H15 domain occupies 48-118 (THPPYFQMIK…KIKASYKLSE (71 aa)). Positions 160 to 202 (KAKATPKPKKVGAKRTRKSTPAKAKQPKSIKSPAAKRAKKIAV) are enriched in basic residues.

This sequence belongs to the histone H1/H5 family.

Its subcellular location is the nucleus. The protein localises to the chromosome. Histones H1 are necessary for the condensation of nucleosome chains into higher-order structures. The protein is Histone H1 of Solanum pennellii (Tomato).